A 185-amino-acid polypeptide reads, in one-letter code: UPF0149 protein XF_2010 (185 aa).

It belongs to the UPF0149 family.

The polypeptide is UPF0149 protein XF_2010 (Xylella fastidiosa (strain 9a5c)).